A 324-amino-acid chain; its full sequence is Fructose-1,6-bisphosphatase class 1 (324 aa).

Mg(2+)-binding residues include E88, D107, L109, and D110. Residues 110–113 (DGSS), N199, and K265 contribute to the substrate site. E271 provides a ligand contact to Mg(2+).

It belongs to the FBPase class 1 family. As to quaternary structure, homotetramer. Mg(2+) serves as cofactor.

It is found in the cytoplasm. The catalysed reaction is beta-D-fructose 1,6-bisphosphate + H2O = beta-D-fructose 6-phosphate + phosphate. It participates in carbohydrate biosynthesis; gluconeogenesis. In Neisseria meningitidis serogroup C (strain 053442), this protein is Fructose-1,6-bisphosphatase class 1.